Here is a 394-residue protein sequence, read N- to C-terminus: Nuclear hormone receptor family member nhr-18 (394 aa).

The segment at residues 8–83 (SGSCEVCGDK…VGMDTRRFQT (76 aa)) is a DNA-binding region (nuclear receptor). 2 NR C4-type zinc fingers span residues 11-31 (CEVC…CRAC) and 48-71 (CPNG…LKKC). Residues 134–394 (MLQKPTNHVL…FSHPEMFEAT (261 aa)) form the NR LBD domain.

The protein belongs to the nuclear hormone receptor family.

The protein resides in the nucleus. Its function is as follows. Orphan nuclear receptor. The chain is Nuclear hormone receptor family member nhr-18 (nhr-18) from Caenorhabditis elegans.